A 214-amino-acid chain; its full sequence is MNNLKRLTKTIFSCFTLSALLLLAGCETLPPMTDLSPITVIDARQATAWELQGKLAIKTPDDKLSANIYWRHSEDRDELTLTTMLGTTVLTLNSTPNSAHLHIDGKDFRDDNAQRLLERVSGWSIPLADLPLWITGQVGPNDQVIESDSQGKPKQLTNTQTPPPWQVAFLSWQSQSGASVPHQLKLERGDLQLKLQLNQWQALGKPAILVGEQP.

The first 25 residues, 1-25, serve as a signal peptide directing secretion; the sequence is MNNLKRLTKTIFSCFTLSALLLLAG. A lipid anchor (N-palmitoyl cysteine) is attached at C26. A lipid anchor (S-diacylglycerol cysteine) is attached at C26. Residues 143–160 show a composition bias toward polar residues; the sequence is QVIESDSQGKPKQLTNTQ. A disordered region spans residues 143-163; sequence QVIESDSQGKPKQLTNTQTPP.

This sequence belongs to the LolB family. Monomer.

It is found in the cell outer membrane. In terms of biological role, plays a critical role in the incorporation of lipoproteins in the outer membrane after they are released by the LolA protein. The chain is Outer-membrane lipoprotein LolB from Shewanella baltica (strain OS223).